The primary structure comprises 93 residues: Small ribosomal subunit protein uS19 (93 aa).

It belongs to the universal ribosomal protein uS19 family.

Functionally, protein S19 forms a complex with S13 that binds strongly to the 16S ribosomal RNA. This is Small ribosomal subunit protein uS19 from Micrococcus luteus (strain ATCC 4698 / DSM 20030 / JCM 1464 / CCM 169 / CCUG 5858 / IAM 1056 / NBRC 3333 / NCIMB 9278 / NCTC 2665 / VKM Ac-2230) (Micrococcus lysodeikticus).